A 471-amino-acid chain; its full sequence is Putative multidrug resistance protein MdtD (471 aa).

13 helical membrane passes run 12 to 32 (LWIVAFGFFMQSLDTTIVNTA), 49 to 69 (MIIVSYVLTVAVMLPASGWLA), 77 to 97 (IFFTAIVLFTAGSLFCAQAST), 106 to 126 (VLQGIGGAMMVPVGRLTVMKI), 138 to 158 (FVTLPGQVGPLLGPALGGVLV), 165 to 185 (WIFLINIPVGIVGAIATLCLM), 195 to 215 (FDLSGFLLLAAGMATLTLALD), 220 to 240 (LGISSRWLAGLVAVGLAALLL), 263 to 283 (FSLGLGGSFAGRIGSGMLPFM), 286 to 306 (VFLQIGLGFSPFHAGLMMIPM), 342 to 362 (LLFMFSALAGWYYALPLVLFL), 393 to 413 (LLSMVMQLSMSIGVTIAGLLL), and 431 to 451 (VFLYTYLSMAAIIALPALIFS).

This sequence belongs to the major facilitator superfamily. TCR/Tet family.

The protein localises to the cell inner membrane. The sequence is that of Putative multidrug resistance protein MdtD from Klebsiella pneumoniae (strain 342).